The chain runs to 447 residues: MKREKAIIRQLISEKKRFEKIKEGDVMAGKDDFGTTKYIIHAEFEANGVVERPDVVGAIFGQTEGLLGDDLDLRELQKTGRIGRIKVEVHTKAGKSYGTILVPSSLDRVETAIIAAALETIDRVGPCEAKIRVVKIEDVRASKRKYIIERAKEILETLIEEEIPETQELVEEVRKAVREMELIEYGPEKLPAGPHVPFSDSIIVVEGRADVLNLLRHGIKNAIAVEGTSIPETIIKLSKERIVTAFTDGDRGGELILKELLQVADIDYVARAPEGKEVEELTKKEIIKALRSKVPAEEVYNELFNKGKSFYEIVREREGKVKEEPQEKAETQPKQQVKVNEKIVKPLPVIKQDYKGFEEFVERVKNSPDPVALLLDENKNIIAEVHTRDLLNAIEENDGVYAIVFNGIITQRLIDVVSEKGVRYLIGAKKANVVRRPITLKVITFAD.

Residues 200 to 274 (DSIIVVEGRA…DIDYVARAPE (75 aa)) form the Toprim domain. 3 residues coordinate Mg(2+): Glu206, Asp248, and Asp250.

Belongs to the archaeal DnaG primase family. As to quaternary structure, forms a ternary complex with MCM helicase and DNA. Component of the archaeal exosome complex. Mg(2+) is required as a cofactor.

It catalyses the reaction ssDNA + n NTP = ssDNA/pppN(pN)n-1 hybrid + (n-1) diphosphate.. Functionally, RNA polymerase that catalyzes the synthesis of short RNA molecules used as primers for DNA polymerase during DNA replication. Also part of the exosome, which is a complex involved in RNA degradation. Acts as a poly(A)-binding protein that enhances the interaction between heteromeric, adenine-rich transcripts and the exosome. This is DNA primase DnaG from Pyrococcus horikoshii (strain ATCC 700860 / DSM 12428 / JCM 9974 / NBRC 100139 / OT-3).